The primary structure comprises 246 residues: DNA repair protein RecO (246 aa).

It belongs to the RecO family.

Functionally, involved in DNA repair and RecF pathway recombination. The polypeptide is DNA repair protein RecO (Pelobacter propionicus (strain DSM 2379 / NBRC 103807 / OttBd1)).